The primary structure comprises 95 residues: 1,2-phenylacetyl-CoA epoxidase, subunit B (95 aa).

In terms of assembly, homotrimer. Forms a stable heterodimer with PaaC. Probably forms an oligomer with PaaAC.

It functions in the pathway aromatic compound metabolism; phenylacetate degradation. Component of 1,2-phenylacetyl-CoA epoxidase multicomponent enzyme system which catalyzes the reduction of phenylacetyl-CoA (PA-CoA) to form 1,2-epoxyphenylacetyl-CoA. The subunit B may play a regulatory role or be directly involved in electron transport. The polypeptide is 1,2-phenylacetyl-CoA epoxidase, subunit B (paaB) (Escherichia coli (strain K12)).